The following is a 21-amino-acid chain: Japonicin-2 (21 aa).

A disulfide bridge links Cys14 with Cys21.

As to expression, expressed by the skin glands.

It localises to the secreted. Functionally, antibacterial activity against the Gram-negative bacterium E.coli and the Gram-positive bacterium S.aureus. This is Japonicin-2 from Rana japonica (Japanese reddish frog).